We begin with the raw amino-acid sequence, 152 residues long: Ribosome maturation factor RimP (152 aa).

The protein belongs to the RimP family.

Its subcellular location is the cytoplasm. In terms of biological role, required for maturation of 30S ribosomal subunits. This chain is Ribosome maturation factor RimP, found in Burkholderia lata (strain ATCC 17760 / DSM 23089 / LMG 22485 / NCIMB 9086 / R18194 / 383).